Consider the following 88-residue polypeptide: Small ribosomal subunit protein uS15 (88 aa).

Belongs to the universal ribosomal protein uS15 family. As to quaternary structure, part of the 30S ribosomal subunit. Forms a bridge to the 50S subunit in the 70S ribosome, contacting the 23S rRNA.

Its function is as follows. One of the primary rRNA binding proteins, it binds directly to 16S rRNA where it helps nucleate assembly of the platform of the 30S subunit by binding and bridging several RNA helices of the 16S rRNA. Forms an intersubunit bridge (bridge B4) with the 23S rRNA of the 50S subunit in the ribosome. This Leptospira interrogans serogroup Icterohaemorrhagiae serovar copenhageni (strain Fiocruz L1-130) protein is Small ribosomal subunit protein uS15.